The primary structure comprises 470 residues: ATP synthase subunit beta (470 aa).

Position 157-164 (157-164 (GGAGVGKT)) interacts with ATP.

It belongs to the ATPase alpha/beta chains family. As to quaternary structure, F-type ATPases have 2 components, CF(1) - the catalytic core - and CF(0) - the membrane proton channel. CF(1) has five subunits: alpha(3), beta(3), gamma(1), delta(1), epsilon(1). CF(0) has three main subunits: a(1), b(2) and c(9-12). The alpha and beta chains form an alternating ring which encloses part of the gamma chain. CF(1) is attached to CF(0) by a central stalk formed by the gamma and epsilon chains, while a peripheral stalk is formed by the delta and b chains.

The protein localises to the cell inner membrane. It catalyses the reaction ATP + H2O + 4 H(+)(in) = ADP + phosphate + 5 H(+)(out). In terms of biological role, produces ATP from ADP in the presence of a proton gradient across the membrane. The catalytic sites are hosted primarily by the beta subunits. The chain is ATP synthase subunit beta from Geobacter metallireducens (strain ATCC 53774 / DSM 7210 / GS-15).